Here is a 276-residue protein sequence, read N- to C-terminus: Replication protein A 32 kDa subunit-A (276 aa).

Positions 19 to 31 (GGGGYMQSPGGFG) are enriched in gly residues. Positions 19-47 (GGGGYMQSPGGFGSPAPTQGEKKSRSRSQ) are disordered. Positions 77–151 (VTIVGIVRHA…KSVVAFKIAP (75 aa)) form a DNA-binding region, OB.

This sequence belongs to the replication factor A protein 2 family. As to quaternary structure, component of the replication protein A complex (RPA/RP-A), a heterotrimeric complex composed of RPA1, RPA2 and RPA3. Post-translationally, differentially phosphorylated throughout the cell cycle, becoming phosphorylated at the G1-S transition and dephosphorylated in late mitosis. Phosphorylation increases upon replication fork stalling.

It localises to the nucleus. The protein resides in the PML body. Its function is as follows. As part of the heterotrimeric replication protein A complex (RPA/RP-A), binds and stabilizes single-stranded DNA intermediates, that form during DNA replication or upon DNA stress. It prevents their reannealing and in parallel, recruits and activates different proteins and complexes involved in DNA metabolism. Thereby, it plays an essential role both in DNA replication and the cellular response to DNA damage. This Xenopus laevis (African clawed frog) protein is Replication protein A 32 kDa subunit-A (rpa2-a).